A 90-amino-acid polypeptide reads, in one-letter code: Small ribosomal subunit protein bS16 (90 aa).

Belongs to the bacterial ribosomal protein bS16 family.

The chain is Small ribosomal subunit protein bS16 from Shouchella clausii (strain KSM-K16) (Alkalihalobacillus clausii).